The chain runs to 504 residues: L-amino-acid oxidase (504 aa).

A signal peptide spans 1–18 (MNVFFMFSLLFLAALGSC). A disulfide bridge links Cys28 with Cys191. FAD contacts are provided by residues 61–62 (MS), 81–82 (EA), Arg89, and 105–108 (GPMR). Residue Arg108 participates in substrate binding. An N-linked (GlcNAc...) asparagine glycan is attached at Asn190. Position 241 (His241) interacts with substrate. Val279 is an FAD binding site. A disulfide bridge links Cys349 with Cys430. An N-linked (GlcNAc...) asparagine glycan is attached at Asn379. Tyr390 contacts substrate. FAD contacts are provided by residues Glu475 and 482 to 487 (GWIDST). Residue 482–483 (GW) coordinates substrate.

The protein belongs to the flavin monoamine oxidase family. FIG1 subfamily. As to quaternary structure, homodimer; non-covalently linked. FAD is required as a cofactor. Expressed by the venom gland.

The protein localises to the secreted. The catalysed reaction is an L-alpha-amino acid + O2 + H2O = a 2-oxocarboxylate + H2O2 + NH4(+). It carries out the reaction L-leucine + O2 + H2O = 4-methyl-2-oxopentanoate + H2O2 + NH4(+). Catalyzes an oxidative deamination of predominantly hydrophobic and aromatic L-amino acids, thus producing hydrogen peroxide that may contribute to the diverse toxic effects of this enzyme. Shows activity on L-Leu. Exhibits diverse biological activities, such as apoptosis, and inhibition of agonist- and shear stress-induced platelet aggregation (SIPA). Effects of snake L-amino oxidases on platelets are controversial, since they either induce aggregation or inhibit agonist-induced aggregation. These different effects are probably due to different experimental conditions. This protein may also induce hemorrhage, hemolysis, edema, antibacterial and antiparasitic activities. The polypeptide is L-amino-acid oxidase (Gloydius blomhoffii (Mamushi)).